Reading from the N-terminus, the 133-residue chain is Aspartate 1-decarboxylase (133 aa).

Residue serine 26 is the Schiff-base intermediate with substrate; via pyruvic acid of the active site. Serine 26 is subject to Pyruvic acid (Ser). Threonine 58 provides a ligand contact to substrate. Tyrosine 59 functions as the Proton donor in the catalytic mechanism. 74–76 (GAA) serves as a coordination point for substrate.

The protein belongs to the PanD family. Heterooctamer of four alpha and four beta subunits. Pyruvate is required as a cofactor. Post-translationally, is synthesized initially as an inactive proenzyme, which is activated by self-cleavage at a specific serine bond to produce a beta-subunit with a hydroxyl group at its C-terminus and an alpha-subunit with a pyruvoyl group at its N-terminus.

The protein localises to the cytoplasm. It carries out the reaction L-aspartate + H(+) = beta-alanine + CO2. Its pathway is cofactor biosynthesis; (R)-pantothenate biosynthesis; beta-alanine from L-aspartate: step 1/1. In terms of biological role, catalyzes the pyruvoyl-dependent decarboxylation of aspartate to produce beta-alanine. The chain is Aspartate 1-decarboxylase from Legionella pneumophila (strain Lens).